The following is a 273-amino-acid chain: Small ribosomal subunit protein eS1 (273 aa).

The protein belongs to the eukaryotic ribosomal protein eS1 family. Component of the small ribosomal subunit. Mature ribosomes consist of a small (40S) and a large (60S) subunit. The 40S subunit contains about 33 different proteins and 1 molecule of RNA (18S). The 60S subunit contains about 49 different proteins and 3 molecules of RNA (25S, 5.8S and 5S).

It localises to the cytoplasm. This is Small ribosomal subunit protein eS1 (rps3a) from Dictyostelium discoideum (Social amoeba).